Consider the following 258-residue polypeptide: Snake venom serine proteinase 5 (258 aa).

Residues 1–18 (MVLIRVLANLLILQLSYA) form the signal peptide. Positions 19 to 24 (QKSSEL) are excised as a propeptide. Residues 25-249 (VVGGDECNIN…YNDWIQSIIA (225 aa)) enclose the Peptidase S1 domain. 6 cysteine pairs are disulfide-bonded: Cys-31-Cys-163, Cys-50-Cys-66, Cys-98-Cys-256, Cys-142-Cys-210, Cys-174-Cys-189, and Cys-200-Cys-225. Residue Asn-44 is glycosylated (N-linked (GlcNAc...) asparagine). Active-site charge relay system residues include His-65 and Asp-110. Ser-204 serves as the catalytic Charge relay system.

This sequence belongs to the peptidase S1 family. Snake venom subfamily. As to quaternary structure, monomer. As to expression, expressed by the venom gland.

It localises to the secreted. Functionally, snake venom serine protease that may act in the hemostasis system of the prey. The polypeptide is Snake venom serine proteinase 5 (Crotalus adamanteus (Eastern diamondback rattlesnake)).